The sequence spans 426 residues: Serine hydroxymethyltransferase (426 aa).

(6S)-5,6,7,8-tetrahydrofolate contacts are provided by residues Leu118 and 122–124 (GHL). Lys227 carries the N6-(pyridoxal phosphate)lysine modification.

Belongs to the SHMT family. In terms of assembly, homodimer. Pyridoxal 5'-phosphate serves as cofactor.

It localises to the cytoplasm. The catalysed reaction is (6R)-5,10-methylene-5,6,7,8-tetrahydrofolate + glycine + H2O = (6S)-5,6,7,8-tetrahydrofolate + L-serine. The protein operates within one-carbon metabolism; tetrahydrofolate interconversion. Its pathway is amino-acid biosynthesis; glycine biosynthesis; glycine from L-serine: step 1/1. In terms of biological role, catalyzes the reversible interconversion of serine and glycine with tetrahydrofolate (THF) serving as the one-carbon carrier. This reaction serves as the major source of one-carbon groups required for the biosynthesis of purines, thymidylate, methionine, and other important biomolecules. Also exhibits THF-independent aldolase activity toward beta-hydroxyamino acids, producing glycine and aldehydes, via a retro-aldol mechanism. This chain is Serine hydroxymethyltransferase, found in Mycobacterium leprae (strain Br4923).